We begin with the raw amino-acid sequence, 182 residues long: ATP synthase subunit b, chloroplastic (182 aa).

The chain crosses the membrane as a helical span at residues 29–47 (IINLALLIVLVINVAKDVL).

This sequence belongs to the ATPase B chain family. In terms of assembly, F-type ATPases have 2 components, F(1) - the catalytic core - and F(0) - the membrane proton channel. F(1) has five subunits: alpha(3), beta(3), gamma(1), delta(1), epsilon(1). F(0) has four main subunits: a(1), b(1), b'(1) and c(10-14). The alpha and beta chains form an alternating ring which encloses part of the gamma chain. F(1) is attached to F(0) by a central stalk formed by the gamma and epsilon chains, while a peripheral stalk is formed by the delta, b and b' chains.

The protein resides in the plastid. It is found in the chloroplast thylakoid membrane. Its function is as follows. F(1)F(0) ATP synthase produces ATP from ADP in the presence of a proton or sodium gradient. F-type ATPases consist of two structural domains, F(1) containing the extramembraneous catalytic core and F(0) containing the membrane proton channel, linked together by a central stalk and a peripheral stalk. During catalysis, ATP synthesis in the catalytic domain of F(1) is coupled via a rotary mechanism of the central stalk subunits to proton translocation. In terms of biological role, component of the F(0) channel, it forms part of the peripheral stalk, linking F(1) to F(0). The chain is ATP synthase subunit b, chloroplastic from Heterosigma akashiwo (strain NIES-293 / 8280G21-1).